The primary structure comprises 238 residues: Trypsin-3 (238 aa).

The first 7 residues, 1 to 7, serve as a signal peptide directing secretion; that stretch reads FAVAFAA. Residues 8–15 constitute a propeptide, activation peptide; it reads PIDDEDDK. Residues 16–236 enclose the Peptidase S1 domain; the sequence is IVGGYECRKN…YRSWISSTMS (221 aa). Cystine bridges form between Cys-22/Cys-152, Cys-40/Cys-56, Cys-124/Cys-225, Cys-131/Cys-198, Cys-163/Cys-177, and Cys-188/Cys-212. His-55 serves as the catalytic Charge relay system. Ca(2+) contacts are provided by Glu-67, Asn-69, Val-72, and Glu-77. The Charge relay system role is filled by Asp-99. Ser-192 (charge relay system) is an active-site residue.

Belongs to the peptidase S1 family. Ca(2+) serves as cofactor.

It is found in the secreted. It localises to the extracellular space. It catalyses the reaction Preferential cleavage: Arg-|-Xaa, Lys-|-Xaa.. This chain is Trypsin-3, found in Salmo salar (Atlantic salmon).